The primary structure comprises 449 residues: Probable rhamnogalacturonase E (449 aa).

A signal peptide spans 1–21; it reads MRSKTFSVLSSCLLLIATVQG. The cysteines at positions 42 and 68 are disulfide-linked. N-linked (GlcNAc...) asparagine glycosylation is found at N53, N91, and N106. D221 serves as the catalytic Proton donor. Cysteines 223 and 240 form a disulfide. N241 and N256 each carry an N-linked (GlcNAc...) asparagine glycan. The active site involves H296. A glycan (N-linked (GlcNAc...) asparagine) is linked at N323. 2 cysteine pairs are disulfide-bonded: C346-C352 and C374-C383.

Belongs to the glycosyl hydrolase 28 family.

The protein localises to the secreted. The catalysed reaction is Endohydrolysis of alpha-D-GalA-(1-&gt;2)-alpha-L-Rha glycosidic bond in the rhamnogalacturonan I backbone with initial inversion of anomeric configuration releasing oligosaccharides with beta-D-GalA at the reducing end.. Its function is as follows. Pectinolytic enzymes consist of four classes of enzymes: pectine lyase, polygalacturonase, pectin methylesterase and rhamnogalacturonase. Hydrolyzes alpha-D-galacturonopyranosyl-(1,2)-alpha-L-rhamnopyranosyl linkages in the backbone of the hairy regions of pectins. The chain is Probable rhamnogalacturonase E (rhgE) from Aspergillus flavus (strain ATCC 200026 / FGSC A1120 / IAM 13836 / NRRL 3357 / JCM 12722 / SRRC 167).